A 195-amino-acid polypeptide reads, in one-letter code: NADH-quinone oxidoreductase subunit B (195 aa).

Cys-74, Cys-75, Cys-139, and Cys-169 together coordinate [4Fe-4S] cluster.

This sequence belongs to the complex I 20 kDa subunit family. In terms of assembly, NDH-1 is composed of 14 different subunits. Subunits NuoB, C, D, E, F, and G constitute the peripheral sector of the complex. The cofactor is [4Fe-4S] cluster.

Its subcellular location is the cell inner membrane. The catalysed reaction is a quinone + NADH + 5 H(+)(in) = a quinol + NAD(+) + 4 H(+)(out). Its function is as follows. NDH-1 shuttles electrons from NADH, via FMN and iron-sulfur (Fe-S) centers, to quinones in the respiratory chain. The immediate electron acceptor for the enzyme in this species is believed to be ubiquinone. Couples the redox reaction to proton translocation (for every two electrons transferred, four hydrogen ions are translocated across the cytoplasmic membrane), and thus conserves the redox energy in a proton gradient. The chain is NADH-quinone oxidoreductase subunit B from Methylobacterium sp. (strain 4-46).